We begin with the raw amino-acid sequence, 342 residues long: 4-hydroxy-2-oxovalerate aldolase (342 aa).

The region spanning 8-260 (ITVHDMTLRD…ATGVDLFKMQ (253 aa)) is the Pyruvate carboxyltransferase domain. 16–17 (RD) serves as a coordination point for substrate. D17 provides a ligand contact to Mn(2+). H20 acts as the Proton acceptor in catalysis. S170 and H199 together coordinate substrate. 2 residues coordinate Mn(2+): H199 and H201. Y290 contributes to the substrate binding site.

It belongs to the 4-hydroxy-2-oxovalerate aldolase family.

It carries out the reaction (S)-4-hydroxy-2-oxopentanoate = acetaldehyde + pyruvate. The chain is 4-hydroxy-2-oxovalerate aldolase from Albidiferax ferrireducens (strain ATCC BAA-621 / DSM 15236 / T118) (Rhodoferax ferrireducens).